A 764-amino-acid chain; its full sequence is G-type lectin S-receptor-like serine/threonine-protein kinase SD3-1 (764 aa).

An N-terminal signal peptide occupies residues 1–24 (MKMLRALLLCLSLVFFLAFQIVVS). 2 Bulb-type lectin domains span residues 25 to 151 (EIQL…QSFG) and 154 to 279 (TDTL…WKPV). Residues 25–442 (EIQLGSKLVV…TKSHSICIPC (418 aa)) lie on the Extracellular side of the membrane. 3 N-linked (GlcNAc...) asparagine glycosylation sites follow: asparagine 92, asparagine 198, and asparagine 248. In terms of domain architecture, EGF-like; atypical spans 283-320 (VENQCRVFATCGSQVCSFNSSGYTECNCPFNAFVSVSD). 5 disulfide bridges follow: cysteine 287–cysteine 298, cysteine 293–cysteine 308, cysteine 332–cysteine 413, cysteine 365–cysteine 388, and cysteine 369–cysteine 375. N-linked (GlcNAc...) asparagine glycosylation is found at asparagine 301 and asparagine 353. Residues 332–413 (CKSGFNMVKF…LSSISYVKTC (82 aa)) form the Apple domain. N-linked (GlcNAc...) asparagine glycosylation occurs at asparagine 423. Residues 443–463 (LVGATSTTLVLFLGFQLGIVV) form a helical membrane-spanning segment. Topologically, residues 464 to 764 (YIYRRKKKLA…SESSQSLYEP (301 aa)) are cytoplasmic. The 299-residue stretch at 466–764 (YRRKKKLAKK…SESSQSLYEP (299 aa)) folds into the Protein kinase domain. ATP-binding positions include 508-516 (IGPQIFKGV) and lysine 526. The interval 586–603 (LRSKKLTWRIRTDTCLSV) is caM-binding. The interval 738–764 (DPPPPPFACARSSPTNSSESSQSLYEP) is disordered. Low complexity predominate over residues 749-764 (SSPTNSSESSQSLYEP).

It localises to the cell membrane. It catalyses the reaction L-seryl-[protein] + ATP = O-phospho-L-seryl-[protein] + ADP + H(+). It carries out the reaction L-threonyl-[protein] + ATP = O-phospho-L-threonyl-[protein] + ADP + H(+). This is G-type lectin S-receptor-like serine/threonine-protein kinase SD3-1 (SD31) from Arabidopsis thaliana (Mouse-ear cress).